We begin with the raw amino-acid sequence, 216 residues long: MLGIGAFKQRMPRSGEALPGRTQALPLHNTHLINGHPLRGEFTGLAQVQFGLGCFWGAERKFWNVPGVYTTAVGYAGGKTPNATYSEVCSGQTGHTEAVLVVYDAQAVSFEQLLRTFWESHDPTQGMQQGNDVGTQYRSAIYCSTQAQYDAAIASRDAYQQQLTAAGYGDITTEILYPAPTFYYAEDDHQQYLAKHPNGYCGLGGTGVSCPIGLDA.

The active site involves Cys54.

This sequence belongs to the MsrA Met sulfoxide reductase family.

The catalysed reaction is L-methionyl-[protein] + [thioredoxin]-disulfide + H2O = L-methionyl-(S)-S-oxide-[protein] + [thioredoxin]-dithiol. It catalyses the reaction [thioredoxin]-disulfide + L-methionine + H2O = L-methionine (S)-S-oxide + [thioredoxin]-dithiol. Functionally, has an important function as a repair enzyme for proteins that have been inactivated by oxidation. Catalyzes the reversible oxidation-reduction of methionine sulfoxide in proteins to methionine. The protein is Peptide methionine sulfoxide reductase MsrA of Xanthomonas campestris pv. campestris (strain ATCC 33913 / DSM 3586 / NCPPB 528 / LMG 568 / P 25).